Here is a 652-residue protein sequence, read N- to C-terminus: MSSNDSAQTRNLQEERFNERTSTPTVVTAVLPDTNGPTTNSTSGSVGPPHPTPNVPVPTQSSSDPPSASGIFAKEIDLPRNVIQHSGNKFILDVVPDSRFPTFAITEFVQRSFSNFTFEQYSYVSPASLVGYLVYMIHAFVFLVDAFERSPMSAYASEIDASHAYLRIIDAFSDAYIPDFLFEILDTYLSHRLDIRSKLEMNVSYGSVLYKYDAPRIVAPSIFLLAHNQLISQSRESTAYEKWLDSIVIHYSRAVIRVGNLVGGLYQSSHGSTTTHFTYRNWFARSLSRLADSATHRTHLRRPMISEFDYNIPSVNNNTYNPYVHLLMLEPNNRNITLDFIRSLSSFCSTELKATRTLRDHISRRSAAISRCVIKGPEAPTWHSSPLDDLKEKSKQGNFSQFCEVAKFGLPRKENSESYTFKFPKDASTIDTAFYLIQENGRSSVLDPTTADEELHTEGMNLLFDPYDDESSAHYATVLSGKLIQNSNIDGETLLLPDPTTGLARTNSRYLQGSVLIRNVLPEFDQHEIRLFPRYPQISRLSASLTLLFNMRQVWIPRFKQKVDEQPKLSNFSWNEGCDGTVPSLNVVTAESSTNGPAAEQQVILWSSYRHVSNSDRPTVDTVYYYSTLELLFGTRSSMMQTYNLHQLLSLH.

Residues 1–11 (MSSNDSAQTRN) show a composition bias toward polar residues. Positions 1–70 (MSSNDSAQTR…SSSDPPSASG (70 aa)) are disordered. The span at 34-47 (TNGPTTNSTSGSVG) shows a compositional bias: low complexity.

The protein localises to the virion. Its function is as follows. The capsid protein self-assembles to form an icosahedral capsid with a T=2 symmetry made of 120 subunits. In Atkinsonella hypoxylon virus (isolate 2H) (AhV), this protein is Capsid protein.